The sequence spans 378 residues: Ribosomal RNA large subunit methyltransferase G (378 aa).

This sequence belongs to the methyltransferase superfamily. RlmG family.

The protein localises to the cytoplasm. The catalysed reaction is guanosine(1835) in 23S rRNA + S-adenosyl-L-methionine = N(2)-methylguanosine(1835) in 23S rRNA + S-adenosyl-L-homocysteine + H(+). Functionally, specifically methylates the guanine in position 1835 (m2G1835) of 23S rRNA. This Salmonella heidelberg (strain SL476) protein is Ribosomal RNA large subunit methyltransferase G.